A 223-amino-acid polypeptide reads, in one-letter code: UPF0441 protein YgiB (223 aa).

Residues 178–195 are compositionally biased toward low complexity; the sequence is TVPKTAMAPKPATTTTVT. The interval 178 to 223 is disordered; the sequence is TVPKTAMAPKPATTTTVTRGGFGESIAKQSTMQRSATGTSSRSMGG. The segment covering 204 to 223 has biased composition (polar residues); sequence AKQSTMQRSATGTSSRSMGG.

It belongs to the UPF0441 family.

This Shigella boydii serotype 4 (strain Sb227) protein is UPF0441 protein YgiB.